The sequence spans 312 residues: Olfactory receptor 51B5 (312 aa).

The Extracellular segment spans residues 1-23 (MSSSGSSHPFLLTGFPGLEEAHH). A helical transmembrane segment spans residues 24 to 44 (WISVFFLFMYISILFGNGTLL). Residues 45–52 (LLIKEDHN) lie on the Cytoplasmic side of the membrane. The helical transmembrane segment at 53 to 73 (LHEPMYFFLAMLAATDLGLAL) threads the bilayer. The Extracellular portion of the chain corresponds to 74–97 (TTMPTVLGVLWLDHREIGSAACFS). The cysteines at positions 95 and 187 are disulfide-linked. The chain crosses the membrane as a helical span at residues 98–118 (QAYFIHSLSFLESGILLAMAY). The Cytoplasmic portion of the chain corresponds to 119–137 (DRFIAICNPLRYTSVLTNT). The chain crosses the membrane as a helical span at residues 138 to 158 (RVVKIGLGVLMRGFVSVVPPI). Residues 159–194 (RPLYFFLYCHSHVLSHAFCLHQDVIKLACADTTFNR) lie on the Extracellular side of the membrane. The helical transmembrane segment at 195–215 (LYPAVLVVFIFVLDYLIIFIS) threads the bilayer. The Cytoplasmic portion of the chain corresponds to 216 to 235 (YVLILKTVLSIASREERAKA). Residues 236–256 (LITCVSHICCVLVFYVTVIGL) traverse the membrane as a helical segment. Over 257 to 271 (SLIHRFGKQVPHIVH) the chain is Extracellular. A helical membrane pass occupies residues 272 to 292 (LIMSYAYFLFPPLMNPITYSV). The Cytoplasmic portion of the chain corresponds to 293-312 (KTKQIQNAILHLFTTHRIGT).

The protein belongs to the G-protein coupled receptor 1 family.

It localises to the cell membrane. Its function is as follows. Odorant receptor. The sequence is that of Olfactory receptor 51B5 (OR51B5) from Homo sapiens (Human).